The chain runs to 173 residues: T cell receptor gamma constant 1 (173 aa).

In terms of domain architecture, Ig-like spans 10–104; it reads PKPTIFLPSI…NKNGVDQEII (95 aa). Cysteine 32 and cysteine 88 form a disulfide bridge. 4 N-linked (GlcNAc...) asparagine glycosylation sites follow: asparagine 66, asparagine 120, asparagine 126, and asparagine 135. Residues 139–161 form a helical membrane-spanning segment; sequence YYMYLLLLLKSVVYFAIITCCLL.

As to quaternary structure, gamma-delta TR is a heterodimer composed of a gamma and delta chain; disulfide-linked. The gamma-delta TR is associated with the transmembrane signaling CD3 coreceptor proteins following the stoichiometry: a single gamma-delta TR heterodimer associates with one CD3D-CD3E heterodimer, one CD3G-CD3E heterodimer and one CD247 homodimer forming a stable octameric structure. Upon activation, gamma-delta TR complex associates with FCER1G to initiate intracellular signaling.

It is found in the cell membrane. Constant region of T cell receptor (TR) gamma chain that participates in the antigen recognition. Gamma-delta TRs recognize a variety of self and foreign non-peptide antigens frequently expressed at the epithelial boundaries between the host and external environment, including endogenous lipids presented by MH-like protein CD1D and phosphoantigens presented by butyrophilin-like molecule BTN3A1. Upon antigen recognition induces rapid, innate-like immune responses involved in pathogen clearance and tissue repair. Binding of gamma-delta TR complex to antigen triggers phosphorylation of immunoreceptor tyrosine-based activation motifs (ITAMs) in the CD3 chains by the LCK and FYN kinases, allowing the recruitment, phosphorylation, and activation of ZAP70 that facilitates phosphorylation of the scaffolding proteins LCP2 and LAT. This lead to the formation of a supramolecular signalosome that recruits the phospholipase PLCG1, resulting in calcium mobilization and ERK activation, ultimately leading to T cell expansion and differentiation into effector cells. Gamma-delta TRs are produced through somatic rearrangement of a limited repertoire of variable (V), diversity (D), and joining (J) genes. The potential diversity of gamma-delta TRs is conferred by the unique ability to rearrange (D) genes in tandem and to utilize all three reading frames. The combinatorial diversity is considerably increased by the sequence exonuclease trimming and random nucleotide (N) region additions which occur during the V-(D)-J rearrangements. The sequence is that of T cell receptor gamma constant 1 from Homo sapiens (Human).